We begin with the raw amino-acid sequence, 395 residues long: Pyridinium-3,5-bisthiocarboxylic acid mononucleotide nickel insertion protein (395 aa).

Belongs to the LarC family.

It carries out the reaction Ni(II)-pyridinium-3,5-bisthiocarboxylate mononucleotide = pyridinium-3,5-bisthiocarboxylate mononucleotide + Ni(2+). Functionally, involved in the biosynthesis of a nickel-pincer cofactor ((SCS)Ni(II) pincer complex). Binds Ni(2+), and functions in nickel delivery to pyridinium-3,5-bisthiocarboxylic acid mononucleotide (P2TMN), to form the mature cofactor. Is thus probably required for the activation of nickel-pincer cofactor-dependent enzymes. This is Pyridinium-3,5-bisthiocarboxylic acid mononucleotide nickel insertion protein from Staphylococcus epidermidis (strain ATCC 35984 / DSM 28319 / BCRC 17069 / CCUG 31568 / BM 3577 / RP62A).